A 401-amino-acid chain; its full sequence is MIVQDSVCSELMRGCEEILPVPELEKKLQKGIPLKIKAGFDPTAPDLHLGHTVLLNKLRQFQQFGHEVIFLIGDFTAMIGDPTGKNVTRMPLSQETVLENAKTYQHQVFKILDPDKTTVAFNSQWLNKFNAVDLIRLAATHTVARMLERDDFNKRYTTGQPIAIHEFLYPLLQGYDSVALKADVELGGTDQKFNLLMGRELQKHYGFEPQVVMMTPLIEGLDGVKKMSKSLDNYIGINETSEQMFGKIMSVSDELMWRYIDLLSFKTGKEIQQLKQSVLEGKNPRDVKIDFAKEIVARFHDQTQAEFAHNKFIERFQKGNIPEDLEELSLVIAEPIALAQLLKQIDLTASTSESIRMVKQGAVKVDGDKISDPSLKLPIGKSYIIQVGKRRIAKLSIQQAH.

The 'HIGH' region signature appears at 42–51 (PTAPDLHLGH). A 'KMSKS' region motif is present at residues 226–230 (KMSKS). Residue K229 participates in ATP binding. The 62-residue stretch at 336–397 (IALAQLLKQI…GKRRIAKLSI (62 aa)) folds into the S4 RNA-binding domain.

Belongs to the class-I aminoacyl-tRNA synthetase family. TyrS type 2 subfamily. In terms of assembly, homodimer.

The protein resides in the cytoplasm. It carries out the reaction tRNA(Tyr) + L-tyrosine + ATP = L-tyrosyl-tRNA(Tyr) + AMP + diphosphate + H(+). In terms of biological role, catalyzes the attachment of tyrosine to tRNA(Tyr) in a two-step reaction: tyrosine is first activated by ATP to form Tyr-AMP and then transferred to the acceptor end of tRNA(Tyr). The sequence is that of Tyrosine--tRNA ligase from Legionella pneumophila (strain Lens).